Here is a 144-residue protein sequence, read N- to C-terminus: Phospholipase A2, membrane associated (144 aa).

A signal peptide spans 1 to 20 (MKTLLLLAVIMIFGLLQAHG). 7 cysteine pairs are disulfide-bonded: cysteine 46/cysteine 137, cysteine 48/cysteine 64, cysteine 63/cysteine 117, cysteine 69/cysteine 144, cysteine 70/cysteine 110, cysteine 79/cysteine 103, and cysteine 97/cysteine 108. Residues histidine 47, glycine 49, and glycine 51 each coordinate Ca(2+). Histidine 67 is a catalytic residue. Residue aspartate 68 coordinates Ca(2+). The active site involves aspartate 111.

Belongs to the phospholipase A2 family. It depends on Ca(2+) as a cofactor. In terms of tissue distribution, expressed in various tissues including heart, kidney, liver, lung, pancreas, placenta, skeletal muscle, prostate, ovary, colon and small intestine. Not detected in lymphoid organs and brain. Expressed in platelets (at protein level).

It is found in the secreted. It localises to the cell membrane. The protein localises to the mitochondrion outer membrane. It carries out the reaction a 1,2-diacyl-sn-glycero-3-phosphoethanolamine + H2O = a 1-acyl-sn-glycero-3-phosphoethanolamine + a fatty acid + H(+). The enzyme catalyses 1-hexadecanoyl-2-(9Z-octadecenoyl)-sn-glycero-3-phosphoethanolamine + H2O = 1-hexadecanoyl-sn-glycero-3-phosphoethanolamine + (9Z)-octadecenoate + H(+). The catalysed reaction is 1-hexadecanoyl-2-(9Z,12Z-octadecadienoyl)-sn-glycero-3-phosphoethanolamine + H2O = 1-hexadecanoyl-sn-glycero-3-phosphoethanolamine + (9Z,12Z)-octadecadienoate + H(+). It catalyses the reaction 1-hexadecanoyl-2-(5Z,8Z,11Z,14Z-eicosatetraenoyl)-sn-glycero-3-phosphoethanolamine + H2O = 1-hexadecanoyl-sn-glycero-3-phosphoethanolamine + (5Z,8Z,11Z,14Z)-eicosatetraenoate + H(+). It carries out the reaction N-hexadecanoyl-1,2-di-(9Z-octadecenoyl)-sn-glycero-3-phosphoethanolamine + H2O = N-hexadecanoyl-1-(9Z-octadecenoyl)-sn-glycero-3-phosphoethanolamine + (9Z)-octadecenoate + H(+). The enzyme catalyses 1,2-dihexadecanoyl-sn-glycero-3-phospho-(1'-sn-glycerol) + H2O = 1-hexadecanoyl-sn-glycero-3-phospho-(1'-sn-glycerol) + hexadecanoate + H(+). The catalysed reaction is 1-hexadecanoyl-2-(9Z-octadecenoyl)-sn-glycero-3-phosphoglycerol + H2O = 1-hexadecanoyl-sn-glycero-3-phosphoglycerol + (9Z)-octadecenoate + H(+). It catalyses the reaction 1-hexadecanoyl-2-(9Z-octadecenoyl)-sn-glycero-3-phospho-(1'-sn-glycerol) + H2O = 1-hexadecanoyl-sn-glycero-3-phospho-(1'-sn-glycerol) + (9Z)-octadecenoate + H(+). It carries out the reaction a 1,2-diacyl-sn-glycero-3-phosphocholine + H2O = a 1-acyl-sn-glycero-3-phosphocholine + a fatty acid + H(+). The enzyme catalyses 1,2-dihexadecanoyl-sn-glycero-3-phosphocholine + H2O = 1-hexadecanoyl-sn-glycero-3-phosphocholine + hexadecanoate + H(+). The catalysed reaction is 1-hexadecanoyl-2-(9Z-octadecenoyl)-sn-glycero-3-phosphocholine + H2O = 1-hexadecanoyl-sn-glycero-3-phosphocholine + (9Z)-octadecenoate + H(+). It catalyses the reaction 1-hexadecanoyl-2-(9Z,12Z-octadecadienoyl)-sn-glycero-3-phosphocholine + H2O = (9Z,12Z)-octadecadienoate + 1-hexadecanoyl-sn-glycero-3-phosphocholine + H(+). It carries out the reaction 1-hexadecanoyl-2-(4Z,7Z,10Z,13Z,16Z,19Z-docosahexaenoyl)-sn-glycero-3-phosphocholine + H2O = (4Z,7Z,10Z,13Z,16Z,19Z)-docosahexaenoate + 1-hexadecanoyl-sn-glycero-3-phosphocholine + H(+). Functionally, secretory calcium-dependent phospholipase A2 that primarily targets extracellular phospholipids with implications in host antimicrobial defense, inflammatory response and tissue regeneration. Hydrolyzes the ester bond of the fatty acyl group attached at sn-2 position of phospholipids (phospholipase A2 activity) with preference for phosphatidylethanolamines and phosphatidylglycerols over phosphatidylcholines. Contributes to lipid remodeling of cellular membranes and generation of lipid mediators involved in pathogen clearance. Displays bactericidal activity against Gram-positive bacteria by directly hydrolyzing phospholipids of the bacterial membrane. Upon sterile inflammation, targets membrane phospholipids of extracellular mitochondria released from activated platelets, generating free unsaturated fatty acids such as arachidonate that is used by neighboring leukocytes to synthesize inflammatory eicosanoids such as leukotrienes. Simultaneously, by compromising mitochondrial membrane integrity, promotes the release in circulation of potent damage-associated molecular pattern molecules that activate the innate immune response. Plays a stem cell regulator role in the intestinal crypt. Within intracellular compartment mediates Paneth cell differentiation and its stem cell supporting functions by inhibiting Wnt signaling pathway in intestinal stem cell (ICS). Secreted in the intestinal lumen upon inflammation, acts in an autocrine way and promotes prostaglandin E2 synthesis that stimulates Wnt signaling pathway in ICS cells and tissue regeneration. May play a role in the biosynthesis of N-acyl ethanolamines that regulate energy metabolism and inflammation. Hydrolyzes N-acyl phosphatidylethanolamines to N-acyl lysophosphatidylethanolamines, which are further cleaved by a lysophospholipase D to release N-acyl ethanolamines. Independent of its catalytic activity, acts as a ligand for integrins. Binds to and activates integrins ITGAV:ITGB3, ITGA4:ITGB1 and ITGA5:ITGB1. Binds to a site (site 2) which is distinct from the classical ligand-binding site (site 1) and induces integrin conformational changes and enhanced ligand binding to site 1. Induces cell proliferation in an integrin-dependent manner. This is Phospholipase A2, membrane associated (PLA2G2A) from Homo sapiens (Human).